The following is a 360-amino-acid chain: Phospho-N-acetylmuramoyl-pentapeptide-transferase (360 aa).

Transmembrane regions (helical) follow at residues 21–41 (YLSFRAILSVLTALGLSLWMG), 73–93 (TMGGVMILAAISITILLWANL), 94–114 (SNPYVWAVLAVLMGYGAVGFV), 132–152 (WKYFWQSAIALVVAFALYAYG), 168–188 (VMPQLGLMYIVLTYFVIVGTS), 199–219 (GLAIMPTVLVAAGFAVIAWAT), 236–256 (ASELVVVCTAIVGAGLGFLWF), 263–283 (VFMGDVGSLALGGALGTIAVL), 288–308 (LVLVIMGGVFVMETLSVILQV), and 338–358 (VIVRFWIISMVLVLIGLATLK).

Belongs to the glycosyltransferase 4 family. MraY subfamily. It depends on Mg(2+) as a cofactor.

Its subcellular location is the cell inner membrane. It catalyses the reaction UDP-N-acetyl-alpha-D-muramoyl-L-alanyl-gamma-D-glutamyl-meso-2,6-diaminopimeloyl-D-alanyl-D-alanine + di-trans,octa-cis-undecaprenyl phosphate = di-trans,octa-cis-undecaprenyl diphospho-N-acetyl-alpha-D-muramoyl-L-alanyl-D-glutamyl-meso-2,6-diaminopimeloyl-D-alanyl-D-alanine + UMP. It functions in the pathway cell wall biogenesis; peptidoglycan biosynthesis. Its function is as follows. Catalyzes the initial step of the lipid cycle reactions in the biosynthesis of the cell wall peptidoglycan: transfers peptidoglycan precursor phospho-MurNAc-pentapeptide from UDP-MurNAc-pentapeptide onto the lipid carrier undecaprenyl phosphate, yielding undecaprenyl-pyrophosphoryl-MurNAc-pentapeptide, known as lipid I. This chain is Phospho-N-acetylmuramoyl-pentapeptide-transferase, found in Vibrio vulnificus (strain YJ016).